We begin with the raw amino-acid sequence, 451 residues long: UDP-N-acetylmuramate--L-alanine ligase (451 aa).

110–116 (GTHGKTT) serves as a coordination point for ATP.

Belongs to the MurCDEF family.

The protein localises to the cytoplasm. It catalyses the reaction UDP-N-acetyl-alpha-D-muramate + L-alanine + ATP = UDP-N-acetyl-alpha-D-muramoyl-L-alanine + ADP + phosphate + H(+). It participates in cell wall biogenesis; peptidoglycan biosynthesis. Its function is as follows. Cell wall formation. In Francisella tularensis subsp. mediasiatica (strain FSC147), this protein is UDP-N-acetylmuramate--L-alanine ligase.